Consider the following 428-residue polypeptide: Serine--tRNA ligase (428 aa).

231 to 233 (TSE) contributes to the L-serine binding site. ATP contacts are provided by residues 262-264 (RRE) and Val-278. Glu-285 contributes to the L-serine binding site. 349–352 (ELTS) is an ATP binding site. Thr-384 is an L-serine binding site.

This sequence belongs to the class-II aminoacyl-tRNA synthetase family. Type-1 seryl-tRNA synthetase subfamily. As to quaternary structure, homodimer. The tRNA molecule binds across the dimer.

It localises to the cytoplasm. The catalysed reaction is tRNA(Ser) + L-serine + ATP = L-seryl-tRNA(Ser) + AMP + diphosphate + H(+). It catalyses the reaction tRNA(Sec) + L-serine + ATP = L-seryl-tRNA(Sec) + AMP + diphosphate + H(+). The protein operates within aminoacyl-tRNA biosynthesis; selenocysteinyl-tRNA(Sec) biosynthesis; L-seryl-tRNA(Sec) from L-serine and tRNA(Sec): step 1/1. Catalyzes the attachment of serine to tRNA(Ser). Is also able to aminoacylate tRNA(Sec) with serine, to form the misacylated tRNA L-seryl-tRNA(Sec), which will be further converted into selenocysteinyl-tRNA(Sec). In Bifidobacterium longum (strain NCC 2705), this protein is Serine--tRNA ligase.